A 131-amino-acid chain; its full sequence is Profilin (131 aa).

Belongs to the profilin family. Occurs in many kinds of cells as a complex with monomeric actin in a 1:1 ratio.

The protein resides in the cytoplasm. Its subcellular location is the cytoskeleton. Its function is as follows. Binds to actin and affects the structure of the cytoskeleton. At high concentrations, profilin prevents the polymerization of actin, whereas it enhances it at low concentrations. By binding to PIP2, it inhibits the formation of IP3 and DG. This Prunus avium (Cherry) protein is Profilin.